Reading from the N-terminus, the 2223-residue chain is Protein CHROMATIN REMODELING 4 (2223 aa).

A disordered region spans residues 39-69 (FDSPEYTSSSKPSKQRLKTDSTPERNSSKRK). Residues 55–69 (LKTDSTPERNSSKRK) show a composition bias toward basic and acidic residues. The PHD-type zinc finger occupies 75–122 (YFECVICDLGGDLLCCDSCPRTYHTACLNPPLKRIPNGKWICPKCSPN). 4 stretches are compositionally biased toward basic and acidic residues: residues 173–187 (EKGK…KSTG), 207–223 (SADD…DDLG), 248–285 (ESKL…ETGK), and 294–305 (ELNDGESLERCK). Disordered stretches follow at residues 173–235 (EKGK…LPSD), 248–381 (ESKL…CLED), and 441–474 (AEDR…GTEG). The segment covering 306–315 (TDKKRAKKSL) has biased composition (basic residues). A compositionally biased stretch (basic and acidic residues) spans 353–368 (ETPEKVKKLPKEERRA). The span at 372–381 (TNKSSSCLED) shows a compositional bias: polar residues. Basic and acidic residues predominate over residues 441-466 (AEDRIDSSSETGKSSRDSRLRDKDMD). 2 Chromo domains span residues 531–587 (EEIE…YKAK) and 601–663 (KQPQ…ERNS). One can recognise a Helicase ATP-binding domain in the interval 701-878 (RRCWHKSKNV…YNLLNFLQPS (178 aa)). Residue 714–721 (DEMGLGKT) participates in ATP binding. Residues 829-832 (DEGH) carry the DEAH box motif. The Nuclear localization signal motif lies at 902-909 (LKKLVAPH). The region spanning 1008–1167 (LLHSMLKVLH…GSQKEFEDIL (160 aa)) is the Helicase C-terminal domain. Disordered regions lie at residues 1268-1300 (EETA…DDVV), 1341-1380 (EAYA…LKEK), 1394-1463 (RRNS…ECLP), 1483-1511 (SESS…FNLP), 1760-1779 (LSSL…SSLF), and 2006-2223 (IPPF…LSDD). Residues 1363-1380 (EPELKKEYTPAGRALKEK) show a composition bias toward basic and acidic residues. Residues 1375–1402 (RALKEKFTKLRERQKNLIARRNSVEESL) adopt a coiled-coil conformation. Polar residues predominate over residues 1403–1414 (PSGNVDQVTEVA). Pro residues predominate over residues 2009 to 2019 (FVIPEPPPPAP). Basic residues predominate over residues 2025–2035 (SLRKKRKRKLH). Composition is skewed to polar residues over residues 2039–2061 (QKTT…GNPQ), 2075–2096 (GETS…TEPL), and 2128–2148 (TGTT…TINQ). The span at 2157–2171 (DEKVESERTPLHSDE) shows a compositional bias: basic and acidic residues. The stretch at 2189–2215 (IEAESQNTNAEEEAEAQEEDEESMKMV) forms a coiled coil. Acidic residues predominate over residues 2198–2210 (AEEEAEAQEEDEE).

Belongs to the SNF2/RAD54 helicase family.

The protein resides in the nucleus. Functionally, chromatin-remodeling protein that binds DNA through histones and regulates gene transcription. May specifically recognize and bind trimethylated 'Lys-27' (H3K27me3) and non-methylated 'Lys-4' of histone H3. Probable chromatin remodeling factor. In Arabidopsis thaliana (Mouse-ear cress), this protein is Protein CHROMATIN REMODELING 4.